The sequence spans 374 residues: DNA-directed RNA polymerase subunit alpha (374 aa).

The interval 1–270 is alpha N-terminal domain (alpha-NTD); it reads MIFDEDSSSV…DQFQQFINFD (270 aa). The tract at residues 282–374 is alpha C-terminal domain (alpha-CTD); the sequence is KDVLPYDSNL…ESLSKQYSEE (93 aa).

This sequence belongs to the RNA polymerase alpha chain family. As to quaternary structure, homodimer. The RNAP catalytic core consists of 2 alpha, 1 beta, 1 beta' and 1 omega subunit. When a sigma factor is associated with the core the holoenzyme is formed, which can initiate transcription.

The enzyme catalyses RNA(n) + a ribonucleoside 5'-triphosphate = RNA(n+1) + diphosphate. Its function is as follows. DNA-dependent RNA polymerase catalyzes the transcription of DNA into RNA using the four ribonucleoside triphosphates as substrates. The polypeptide is DNA-directed RNA polymerase subunit alpha (Ehrlichia ruminantium (strain Welgevonden)).